A 195-amino-acid polypeptide reads, in one-letter code: Antigenic thaumatin-like protein ARB_01183 (195 aa).

The signal sequence occupies residues 1–22 (MHSNTAVIALSALAALVPAALA). 2 cysteine pairs are disulfide-bonded: Cys125–Cys153 and Cys130–Cys137. The disordered stretch occupies residues 171-195 (GPKKMFKPVQEKAANRPRHPHARPE). Residues 185–195 (NRPRHPHARPE) show a composition bias toward basic residues.

This sequence belongs to the thaumatin family.

Its subcellular location is the secreted. Might be involved in the inhibition of growth of fungal competitors and pathogenicity. In Arthroderma benhamiae (strain ATCC MYA-4681 / CBS 112371) (Trichophyton mentagrophytes), this protein is Antigenic thaumatin-like protein ARB_01183.